The following is a 123-amino-acid chain: Large ribosomal subunit protein bL12 (123 aa).

This sequence belongs to the bacterial ribosomal protein bL12 family. As to quaternary structure, homodimer. Part of the ribosomal stalk of the 50S ribosomal subunit. Forms a multimeric L10(L12)X complex, where L10 forms an elongated spine to which 2 to 4 L12 dimers bind in a sequential fashion. Binds GTP-bound translation factors.

Functionally, forms part of the ribosomal stalk which helps the ribosome interact with GTP-bound translation factors. Is thus essential for accurate translation. The sequence is that of Large ribosomal subunit protein bL12 from Cytophaga hutchinsonii (strain ATCC 33406 / DSM 1761 / CIP 103989 / NBRC 15051 / NCIMB 9469 / D465).